The sequence spans 352 residues: Phosphoribosylformylglycinamidine cyclo-ligase (352 aa).

This sequence belongs to the AIR synthase family.

It localises to the cytoplasm. It catalyses the reaction 2-formamido-N(1)-(5-O-phospho-beta-D-ribosyl)acetamidine + ATP = 5-amino-1-(5-phospho-beta-D-ribosyl)imidazole + ADP + phosphate + H(+). Its pathway is purine metabolism; IMP biosynthesis via de novo pathway; 5-amino-1-(5-phospho-D-ribosyl)imidazole from N(2)-formyl-N(1)-(5-phospho-D-ribosyl)glycinamide: step 2/2. The polypeptide is Phosphoribosylformylglycinamidine cyclo-ligase (Nitrosospira multiformis (strain ATCC 25196 / NCIMB 11849 / C 71)).